The primary structure comprises 171 residues: Alpha-amylase/trypsin inhibitor CMd (171 aa).

The first 24 residues, 1-24, serve as a signal peptide directing secretion; it reads MACKSSRSLLLLATVMVSVFAAAA.

This sequence belongs to the protease inhibitor I6 (cereal trypsin/alpha-amylase inhibitor) family. As to quaternary structure, heterotetramer of one CMa, one CMb and two CMd chains. Five disulfide bonds, which are essential for the inhibitor activity, are probably present. In terms of tissue distribution, endosperm.

Its subcellular location is the secreted. Functionally, part of a complex with inhibitory activity, but CMd is inactive as a separate subunit. In Hordeum vulgare (Barley), this protein is Alpha-amylase/trypsin inhibitor CMd (IAT3).